Here is a 222-residue protein sequence, read N- to C-terminus: tRNA (guanine-N(1)-)-methyltransferase (222 aa).

Residues glycine 110 and 130 to 135 contribute to the S-adenosyl-L-methionine site; that span reads IGDYVL.

Belongs to the RNA methyltransferase TrmD family. In terms of assembly, homodimer.

The protein resides in the cytoplasm. The enzyme catalyses guanosine(37) in tRNA + S-adenosyl-L-methionine = N(1)-methylguanosine(37) in tRNA + S-adenosyl-L-homocysteine + H(+). Functionally, specifically methylates guanosine-37 in various tRNAs. The polypeptide is tRNA (guanine-N(1)-)-methyltransferase (Protochlamydia amoebophila (strain UWE25)).